Consider the following 150-residue polypeptide: D-aminoacyl-tRNA deacylase (150 aa).

A Gly-cisPro motif, important for rejection of L-amino acids motif is present at residues G140 to P141.

This sequence belongs to the DTD family. As to quaternary structure, homodimer.

Its subcellular location is the cytoplasm. The catalysed reaction is glycyl-tRNA(Ala) + H2O = tRNA(Ala) + glycine + H(+). The enzyme catalyses a D-aminoacyl-tRNA + H2O = a tRNA + a D-alpha-amino acid + H(+). It catalyses the reaction D-tyrosyl-tRNA(Tyr) + H2O = D-tyrosine + tRNA(Tyr). Functionally, an aminoacyl-tRNA editing enzyme that deacylates mischarged D-aminoacyl-tRNAs. Hydrolyzes D-tyrosyl-tRNA(Tyr) into D-tyrosine and free tRNA(Tyr). May also deacylate mischarged D-leucyl-tRNA(Leu). Also deacylates mischarged glycyl-tRNA(Ala), protecting cells against glycine mischarging by AlaRS. Acts via tRNA-based rather than protein-based catalysis; rejects L-amino acids rather than detecting D-amino acids in the active site. By recycling D-aminoacyl-tRNA to D-amino acids and free tRNA molecules, this enzyme counteracts the toxicity associated with the formation of D-aminoacyl-tRNA entities in vivo and helps enforce protein L-homochirality. The sequence is that of D-aminoacyl-tRNA deacylase from Saccharomyces cerevisiae (strain ATCC 204508 / S288c) (Baker's yeast).